Here is a 508-residue protein sequence, read N- to C-terminus: Cell death protein 3 (508 aa).

Positions 1–223 (MMRQDRRNLL…FHEEDMNYVD (223 aa)) are excised as a propeptide. The CARD domain occupies 2–91 (MRQDRRNLLE…HELAAVLEPL (90 aa)). Disordered stretches follow at residues 106–130 (PMSP…TRVH) and 148–184 (YTRA…SSAN). The segment covering 118–127 (LSPSTFSSPT) has biased composition (polar residues). Low complexity predominate over residues 171 to 184 (SPSNSFQSQPSSAN). Catalysis depends on residues His-317 and Cys-360. Positions 392–407 (GPLFNFLGCVRPQAQQ) are required for interaction with ced-4.

It belongs to the peptidase C14A family. In terms of assembly, the active form is probably a heterodimer of the p17 subunit with either the p15 or p13 subunit which are all derived from the precursor by autocatalysis. Interacts with octameric ced-4 (two ced-3 zymogens per one ced-4 octamer); the interaction causes the autoproteolytic cleavage and activation of ced-3. Processed ced-3 also interacts with ced-4 octamer to form a stable holoenzyme. Interacts (via large subunit p17) with csp-3; the interaction prevents ced-3 autoactivation and delays ced-4-induced ced-3 processing. Interacts (via large subunit p17 or small subunit p13 or p15) with csp-2; the interaction inhibits ced-3 autoactivation. Interacts (via propeptide) with nucleoporin npp-14; the interaction tethers ced-3 to the nuclear membrane and prevents its autoprocessing in absence of ced-4. Interacts with dct-1. May form a complex composed of ced-3, ced-4 and mac-1. Post-translationally, autocatalytic cleavage removes the propeptide and generates the catalytic subunit p17 and two non-catalytic subunits p15 and p13; autoproteolysis is induced by ced-4 oligomer. Cleaved by caspase csp-1 probably at Asp-146 and Asp-376.

Its subcellular location is the nucleus membrane. The protein resides in the perikaryon. It localises to the synapse. The protein localises to the mitochondrion. It is found in the cytoplasm. Its subcellular location is the perinuclear region. It catalyses the reaction Strict requirement for an Asp residue at position P1 and has a preferred cleavage sequence of Asp-Glu-Val-Asp-|-.. With respect to regulation, octameric ced-4 activates zymogen autoprocessing and enhances activity of processed ced-3. Zymogen autoactivation is inhibited by csp-3. csp-3 has no effect on active ced-3. Zymogen autoactivation is inhibited by csp-2. Inhibited by cysteine protease inhibitor iodoacetic acid (CH3COOI). Inhibited by benzyloxycarbonyl-DEVD-fluoro-methyl ketone (zDEVD-fmk). Inhibited by benzyloxycarbonyl-VAD-fluoro-methyl ketone (zVAD-fmk). Not inhibited by N-[N-(L-3-transcarboxirane-2-carbonyl)-leucyl]-agmatine (E-64) or by the serine and cysteine protease inhibitor L-1-chloro-3-[4-to-osylamido]-7-amino-2-heptanone (TLCK). Acts as a cysteine protease in controlling programmed cell death (apoptosis) by proteolytically activating or inactivating a wide range of substrates. Component of the egl-1, ced-9, ced-4 and ced-3 apoptotic signaling cascade required for the initiation of programmed cell death in cells fated to die during embryonic and postembryonic development. During oogenesis, required for germline apoptosis downstream of ced-9 and ced-4 but independently of egl-1. By cleaving and activating ced-8, promotes phosphatidylserine exposure on the surface of apoptotic cells; phosphatidylserine is a specific marker only present at the surface of apoptotic cells and acts as a specific signal for engulfment. By cleaving and converting dcr-1 into a deoxyribonuclease (DNase), promotes apoptotic chromosomal DNA fragmentation. By cleaving mitochondrial fission protein drp-1, may regulate the removal of mitochondria during apoptosis. During germline apoptosis, cleaves translation initiation factor ifg-1 (isoform p170) promoting cap-independent translation. During male tail morphogenesis, promotes apoptosis of the tail-spike cell downstream of ced-4 but independently of egl-1 and ced-9. By cleaving cnt-1, prevents the activation of the prosurvival akt-1/2 signaling pathway and thus promotes apoptosis. Downstream of ced-4, may play a role in sex-specific cell apoptosis by cleaving sex-determining protein fem-1. May regulate germline apoptosis in response to DNA damage, probably downstream of let-60/ras and mpk-1 pathway. Cleaves ced-9 in vitro. Cleaves csp-2 isoform b resulting in the removal of the propeptide and the generation of csp-2 subunit p31 in vitro. Independently of its apoptotic role has additional functions. Probably by cleaving and thereby activating actin-severing protein gsnl-1, required for the elimination of transient presynaptic components during larval development downstream of egl-1, ced-9 and ced-4 pathway. Together with ain-1, a component of the miRNA-induced-silencing complex (miRISC), regulates temporal cell fate patterning during larval development. Acts in cell fate patterning by cleaving heterochronic protein lin-28, likely promoting its degradation. Also cleaves heterochronic protein lin-14 and exonuclease disl-2 in vitro. Downstream of calreticulin crt-1 and ced-4 and independently of egl-1 and ced-9, plays a role in the initial steps of axonal regrowth following axotomy. Cleaves 14-3-3-like protein ftt-2, tubulin tbb-2 and calreticulin crt-1 in vitro. Plays also a role in resistance to S.typhimurium-mediated infection. This chain is Cell death protein 3, found in Caenorhabditis remanei (Caenorhabditis vulgaris).